Consider the following 143-residue polypeptide: Small ribosomal subunit protein uS12 (143 aa).

The protein belongs to the universal ribosomal protein uS12 family. In terms of assembly, component of the 40S small ribosomal subunit.

It is found in the cytoplasm. The protein resides in the cytosol. The protein localises to the rough endoplasmic reticulum. This Gillichthys mirabilis (Long-jawed mudsucker) protein is Small ribosomal subunit protein uS12 (rps23).